A 306-amino-acid polypeptide reads, in one-letter code: Pyridoxal 5'-phosphate synthase subunit PdxS (306 aa).

Residue aspartate 36 coordinates D-ribose 5-phosphate. Residue lysine 93 is the Schiff-base intermediate with D-ribose 5-phosphate of the active site. Glycine 165 is a binding site for D-ribose 5-phosphate. Position 177 (arginine 177) interacts with D-glyceraldehyde 3-phosphate. D-ribose 5-phosphate is bound by residues glycine 226 and 247–248 (GS).

Belongs to the PdxS/SNZ family. In the presence of PdxT, forms a dodecamer of heterodimers.

The enzyme catalyses aldehydo-D-ribose 5-phosphate + D-glyceraldehyde 3-phosphate + L-glutamine = pyridoxal 5'-phosphate + L-glutamate + phosphate + 3 H2O + H(+). The protein operates within cofactor biosynthesis; pyridoxal 5'-phosphate biosynthesis. In terms of biological role, catalyzes the formation of pyridoxal 5'-phosphate from ribose 5-phosphate (RBP), glyceraldehyde 3-phosphate (G3P) and ammonia. The ammonia is provided by the PdxT subunit. Can also use ribulose 5-phosphate and dihydroxyacetone phosphate as substrates, resulting from enzyme-catalyzed isomerization of RBP and G3P, respectively. This chain is Pyridoxal 5'-phosphate synthase subunit PdxS, found in Nocardia farcinica (strain IFM 10152).